A 408-amino-acid chain; its full sequence is NADH-quinone oxidoreductase subunit D (408 aa).

It belongs to the complex I 49 kDa subunit family. As to quaternary structure, NDH-1 is composed of 14 different subunits. Subunits NuoB, C, D, E, F, and G constitute the peripheral sector of the complex.

Its subcellular location is the cell inner membrane. The catalysed reaction is a quinone + NADH + 5 H(+)(in) = a quinol + NAD(+) + 4 H(+)(out). Functionally, NDH-1 shuttles electrons from NADH, via FMN and iron-sulfur (Fe-S) centers, to quinones in the respiratory chain. The immediate electron acceptor for the enzyme in this species is believed to be ubiquinone. Couples the redox reaction to proton translocation (for every two electrons transferred, four hydrogen ions are translocated across the cytoplasmic membrane), and thus conserves the redox energy in a proton gradient. This is NADH-quinone oxidoreductase subunit D from Campylobacter jejuni subsp. doylei (strain ATCC BAA-1458 / RM4099 / 269.97).